Reading from the N-terminus, the 601-residue chain is DNA topoisomerase I, mitochondrial (601 aa).

Residues 1 to 50 constitute a mitochondrion transit peptide; that stretch reads MRVVRLLRLRAALTLLGEVPRRPASRGVPGSRRTQKGSGARWEKEKHEDG. The interval 22 to 48 is disordered; the sequence is RPASRGVPGSRRTQKGSGARWEKEKHE. Interaction with DNA regions lie at residues 261 to 262, 324 to 329, and 421 to 423; these read KY, RAGNEK, and TAK. The Topo IB-type catalytic domain maps to 268-601; the sequence is CSKLKGETAW…LAMAGEDFEF (334 aa). The O-(3'-phospho-DNA)-tyrosine intermediate role is filled by Tyr-559.

It belongs to the type IB topoisomerase family. It depends on Ca(2+) as a cofactor. Mg(2+) is required as a cofactor. As to expression, ubiquitous; highest in skeletal muscle, heart, brain and fetal liver.

The protein resides in the mitochondrion. The enzyme catalyses ATP-independent breakage of single-stranded DNA, followed by passage and rejoining.. Its function is as follows. Releases the supercoiling and torsional tension of DNA introduced during duplication of mitochondrial DNA by transiently cleaving and rejoining one strand of the DNA duplex. Introduces a single-strand break via transesterification at a target site in duplex DNA. The scissile phosphodiester is attacked by the catalytic tyrosine of the enzyme, resulting in the formation of a DNA-(3'-phosphotyrosyl)-enzyme intermediate and the expulsion of a 5'-OH DNA strand. The free DNA strand then rotates around the intact phosphodiester bond on the opposing strand, thus removing DNA supercoils. Finally, in the religation step, the DNA 5'-OH attacks the covalent intermediate to expel the active-site tyrosine and restore the DNA phosphodiester backbone. This Homo sapiens (Human) protein is DNA topoisomerase I, mitochondrial (TOP1MT).